Consider the following 239-residue polypeptide: MGRKWANIKEKKAAKDANNSRVYAKFGIEIYVAAKSGDPDPHANQKLRFVIERAKTYNVPKHIIDRAIEKAKGSADEQYSELRYEGFGPNGSMVIVDALTNNVNRTAADVRAAFGKNGGNMGVSGAVSYMFDNTGIIGFAGDDADEILEYLMEKDIDVRDVVEEDGQIIVYTEPEDFHHAQEALKEKGIEEFTVTELEMVPQNEVTLEGDDLGNFEKMLDVLEDLEDVQKVHHNVDLPE.

It belongs to the TACO1 family. YeeN subfamily.

It localises to the cytoplasm. The polypeptide is Probable transcriptional regulatory protein EF_2866 (Enterococcus faecalis (strain ATCC 700802 / V583)).